A 525-amino-acid polypeptide reads, in one-letter code: RNA-directed RNA polymerase (525 aa).

The region spanning 72 to 272 (LVYADNIYIV…DKERLFCSAA (201 aa)) is the RdRp catalytic domain.

Interacts with VP3 in the cytoplasm. May exist in multiple phosphorylated forms.

The protein localises to the virion. The catalysed reaction is RNA(n) + a ribonucleoside 5'-triphosphate = RNA(n+1) + diphosphate. Its function is as follows. RNA-dependent RNA polymerase which is found both free and covalently attached to the genomic RNA. May also contain guanylyl and methyl transferase activities. The sequence is that of RNA-directed RNA polymerase (VP1) from Gallus gallus (Chicken).